The sequence spans 830 residues: Histone acetyltransferase KAT2A (830 aa).

The segment at 1 to 94 (MAEPSQAPNP…RKAQVRGLPR (94 aa)) is disordered. Ala2 carries the N-acetylalanine modification. Pro residues-rich tracts occupy residues 7-33 (APNPVPAAQPRPLHSPAPAPTSTPAPS) and 41-51 (APTPAPAPAPA). A compositionally biased stretch (gly residues) spans 58–69 (TGSGGAGVGSGG). The span at 83–94 (SQRKAQVRGLPR) shows a compositional bias: basic residues. Ser302 is modified (phosphoserine). The segment covering 398–417 (SFSPSMGGGSNSSLSLDSAG) has biased composition (low complexity). A disordered region spans residues 398 to 426 (SFSPSMGGGSNSSLSLDSAGTEPMPAGEK). Residues 496 to 649 (VIGNSLTPKA…GATLMECELN (154 aa)) form the N-acetyltransferase domain. An N6-acetyllysine modification is found at Lys542. The active-site Proton donor/acceptor is Glu568. Acetyl-CoA contacts are provided by residues 572 to 574 (CAV), 579 to 585 (QVKGYGT), and Tyr610. Succinyl-CoA is bound by residues 572–574 (CAV), 579–585 (QVKGYGT), and Tyr610. Lys721 participates in a covalent cross-link: Glycyl lysine isopeptide (Lys-Gly) (interchain with G-Cter in SUMO2). Positions 721 to 825 (KDPDQLYTTL…KFFYFKLKEG (105 aa)) constitute a Bromo domain. The residue at position 728 (Thr728) is a Phosphothreonine. Residues Lys752 and Lys784 each participate in a glycyl lysine isopeptide (Lys-Gly) (interchain with G-Cter in SUMO2) cross-link.

This sequence belongs to the acetyltransferase family. GCN5 subfamily. As to quaternary structure, interacts with EP300, CREBBP and ADA2. Component of the TFTC-HAT complex, at least composed of TAF5L, TAF6L, TAF3, TADA3L, SUPT3H/SPT3, TAF2/TAFII150, TAF4/TAFII135, TAF5/TAFII100, KAT2A/GCN5L2, TAF10 and TRRAP. Component of the STAGA transcription coactivator-HAT complex, at least composed of SUPT3H, KAT2A, SUPT7L, TAF5L, TAF6L, TADA3L, TAD1L, TAF10, TAF12, TRRAP and TAF9. The STAGA core complex is associated with a subcomplex required for histone deubiquitination composed of ATXN7L3, ENY2 and USP22. Component of the ADA2A-containing complex (ATAC), composed of KAT14, KAT2A, TADA2L, TADA3L, ZZ3, MBIP, WDR5, YEATS2, CCDC101 and DR1. In the complex, it probably interacts directly with KAT14, MBIP and WDR5. Interacts with PML. Interacts with CEBPB. Interacts with TACC1, TACC2 and TACC3. Interacts with RELA. Interacts with NFATC2. Interacts with TBX5. Interacts with PLK4. Associates with the 2-oxoglutarate dehydrogenase complex. Interacts with XPC; leading to KAT2A recruitment to promoters and subsequent acetylation of histones. Interacts with ERCC3/XPB; leading to KAT2A recruitment to promoters and subsequent acetylation of histones. Interacts with ISL1. Interactions of ISL1 with MLIP1 or KAT2A may be mutually exclusive. Acetylated at Lys-542, inhibiting the protein acetyltransferase activity. Deacetylation at Lys-542 by SIRT6 promotes phosphorylation at Ser-302 and Thr-728 and subsequent activation of the protein acetyltransferase activity, leading to acetylation and inactivation of PPARGC1A. In terms of tissue distribution, in brain, highly expressed in the hippocampal CA1 region (at protein level). Also expressed in the hippocampal subregions CA3 and the dentate gyrus as well as in the cortex and prefrontal cortex. Expressed at low level in the cerebellum.

The protein localises to the nucleus. It is found in the chromosome. It localises to the cytoplasm. Its subcellular location is the cytoskeleton. The protein resides in the microtubule organizing center. The protein localises to the centrosome. It catalyses the reaction L-lysyl-[histone] + acetyl-CoA = N(6)-acetyl-L-lysyl-[histone] + CoA + H(+). It carries out the reaction L-lysyl-[protein] + acetyl-CoA = N(6)-acetyl-L-lysyl-[protein] + CoA + H(+). The catalysed reaction is succinyl-CoA + L-lysyl-[protein] = N(6)-succinyl-L-lysyl-[protein] + CoA + H(+). The enzyme catalyses glutaryl-CoA + L-lysyl-[protein] = N(6)-glutaryl-L-lysyl-[protein] + CoA + H(+). Its function is as follows. Protein lysine acyltransferase that can act as a acetyltransferase, glutaryltransferase, succinyltransferase or malonyltransferase, depending on the context. Acts as a histone lysine succinyltransferase: catalyzes succinylation of histone H3 on 'Lys-79' (H3K79succ), with a maximum frequency around the transcription start sites of genes. Succinylation of histones gives a specific tag for epigenetic transcription activation. Association with the 2-oxoglutarate dehydrogenase complex, which provides succinyl-CoA, is required for histone succinylation. In different complexes, functions either as an acetyltransferase (HAT) or as a succinyltransferase: in the SAGA and ATAC complexes, acts as a histone acetyltransferase. Has significant histone acetyltransferase activity with core histones, but not with nucleosome core particles. Has a a strong preference for acetylation of H3 at 'Lys-9' (H3K9ac). Acetylation of histones gives a specific tag for epigenetic transcription activation. Recruited by the XPC complex at promoters, where it specifically mediates acetylation of histone variant H2A.Z.1/H2A.Z, thereby promoting expression of target genes. Involved in long-term memory consolidation and synaptic plasticity: acts by promoting expression of a hippocampal gene expression network linked to neuroactive receptor signaling. Acts as a positive regulator of T-cell activation: upon TCR stimulation, recruited to the IL2 promoter following interaction with NFATC2 and catalyzes acetylation of histone H3 at 'Lys-9' (H3K9ac), leading to promote IL2 expression. Required for growth and differentiation of craniofacial cartilage and bone by regulating acetylation of histone H3 at 'Lys-9' (H3K9ac). Regulates embryonic stem cell (ESC) pluripotency and differentiation. Also acetylates non-histone proteins, such as CEBPB, MRE11, PPARGC1A, PLK4 and TBX5. Involved in heart and limb development by mediating acetylation of TBX5, acetylation regulating nucleocytoplasmic shuttling of TBX5. Acts as a negative regulator of centrosome amplification by mediating acetylation of PLK4. Acts as a negative regulator of gluconeogenesis by mediating acetylation and subsequent inactivation of PPARGC1A. Also acts as a histone glutaryltransferase: catalyzes glutarylation of histone H4 on 'Lys-91' (H4K91glu), a mark that destabilizes nucleosomes by promoting dissociation of the H2A-H2B dimers from nucleosomes. The polypeptide is Histone acetyltransferase KAT2A (Mus musculus (Mouse)).